The following is a 1031-amino-acid chain: Zinc finger protein 445 (1031 aa).

Residues 1 to 43 are disordered; sequence MPPGRWHAAYPAQAQSSRERGRLQTVKKEEEDESYTPVQAARP. The segment covering 17–29 has biased composition (basic and acidic residues); it reads SRERGRLQTVKKE. Lysine 28 participates in a covalent cross-link: Glycyl lysine isopeptide (Lys-Gly) (interchain with G-Cter in SUMO1). One can recognise an SCAN box domain in the interval 55–137; that stretch reads RQLFRQLRYH…ALLEELQRDL (83 aa). The KRAB domain maps to 234 to 304; it reads MTFKDVEVTF…NMQAAQPKGN (71 aa). Residues lysine 317, lysine 374, lysine 375, and lysine 399 each participate in a glycyl lysine isopeptide (Lys-Gly) (interchain with G-Cter in SUMO2) cross-link. 3 C2H2-type zinc fingers span residues 485–507, 513–535, and 541–563; these read FKCS…QRLH, FKCR…EKIH, and YKCD…RETH. Lysine 567 is covalently cross-linked (Glycyl lysine isopeptide (Lys-Gly) (interchain with G-Cter in SUMO2)). 2 consecutive C2H2-type zinc fingers follow at residues 597–619 and 625–647; these read FDCS…QRIH and YKCT…MRLH. Lysine 654 participates in a covalent cross-link: Glycyl lysine isopeptide (Lys-Gly) (interchain with G-Cter in SUMO2). C2H2-type zinc fingers lie at residues 681-703 and 709-731; these read FLCQ…QRIH and YQCS…KKKH. Residues lysine 736 and lysine 758 each participate in a glycyl lysine isopeptide (Lys-Gly) (interchain with G-Cter in SUMO2) cross-link. 5 consecutive C2H2-type zinc fingers follow at residues 762 to 784, 790 to 812, 840 to 862, 868 to 890, and 896 to 918; these read YKCS…QRVH, YKCR…QRIH, FWCQ…KGIH, YKCN…QRIH, and FKCQ…QRKH. Residues 911–939 are disordered; that stretch reads LSSHQRKHTRAAQAERSPPARSSSQDTKL. Glycyl lysine isopeptide (Lys-Gly) (interchain with G-Cter in SUMO2) cross-links involve residues lysine 938, lysine 956, and lysine 975. 2 consecutive C2H2-type zinc fingers follow at residues 978–1000 and 1006–1028; these read HKCS…KRFH and FKCS…MKNH.

This sequence belongs to the krueppel C2H2-type zinc-finger protein family.

It is found in the nucleus. Its function is as follows. Transcription regulator required to maintain maternal and paternal gene imprinting, a process by which gene expression is restricted in a parent of origin-specific manner by epigenetic modification of genomic DNA and chromatin, including DNA methylation. Acts by controlling DNA methylation during the earliest multicellular stages of development at multiple imprinting control regions (ICRs). Acts together with ZFP57, but seems to be the major factor in human early embryonic imprinting maintenance. In contrast, in mice, ZFP57 plays the predominant role in imprinting maintenance. This Homo sapiens (Human) protein is Zinc finger protein 445.